The chain runs to 177 residues: Nucleoside triphosphate/diphosphate phosphatase (177 aa).

Arg-23 serves as the catalytic Proton donor. The Mg(2+) site is built by Asn-87, Asp-103, Asp-105, Asp-107, Asp-120, and Glu-123.

The protein belongs to the Ntdp family. The cofactor is Mg(2+).

The enzyme catalyses a ribonucleoside 5'-triphosphate + H2O = a ribonucleoside 5'-diphosphate + phosphate + H(+). The catalysed reaction is a ribonucleoside 5'-diphosphate + H2O = a ribonucleoside 5'-phosphate + phosphate + H(+). Its function is as follows. Has nucleoside phosphatase activity towards nucleoside triphosphates and nucleoside diphosphates. This chain is Nucleoside triphosphate/diphosphate phosphatase, found in Streptococcus agalactiae serotype Ia (strain ATCC 27591 / A909 / CDC SS700).